A 116-amino-acid polypeptide reads, in one-letter code: Large ribosomal subunit protein bL17 (116 aa).

The protein belongs to the bacterial ribosomal protein bL17 family. As to quaternary structure, part of the 50S ribosomal subunit. Contacts protein L32.

The chain is Large ribosomal subunit protein bL17 from Picosynechococcus sp. (strain ATCC 27264 / PCC 7002 / PR-6) (Agmenellum quadruplicatum).